The chain runs to 245 residues: MKHTQSGQSTSPLVIDYTCRVCQMAFVFSSLIPLLLMTPVFCLGNTSECFQNFSQSHKCILMHSPPSAMAELPPSANTSVCSTLYFYGIAIFLGSFVLSLLTIMVLLIRAQTLYKKFVKSTGFLGSEQWAVIHIVDQRVRFYPVAFFCCWGPAVILMIIKLTKPQDTKLHMALYVLQALTATSQGLLNCGVYGWTQHKFHQLKQEARRDADTQTPLLCSQKRFYSRGLNSLESTLTFPASTSTIF.

4 helical membrane-spanning segments follow: residues 24–44 (MAFV…FCLG), 88–108 (GIAI…VLLI), 141–161 (FYPV…IIKL), and 173–195 (LYVL…YGWT).

The protein resides in the membrane. The chain is Transmembrane protein 116 (TMEM116) from Homo sapiens (Human).